The sequence spans 153 residues: MAMVRADADRESLGEGLLQERSQWLWSLPTAQPGAEDADDQLVLGEEELQDLEEEAVARHSFSQRIHSRATPLEVSPSGRLYQSIRHSRMEYSRPTMNIRSQIVSYSSSARPLPQQPAPSLTSWTPIAKHLHSHQQSISSQSPKLVRGASQRR.

The interval 107–153 is disordered; sequence SSSARPLPQQPAPSLTSWTPIAKHLHSHQQSISSQSPKLVRGASQRR.

This sequence belongs to the luteoviruses movement protein family.

Functionally, transports viral genome to neighboring plant cells directly through plasmosdesmata, without any budding. The movement protein allows efficient cell to cell propagation, by bypassing the host cell wall barrier. The chain is Movement protein from Avena byzantina (Oat).